A 353-amino-acid chain; its full sequence is MTAILERRESENLWGRFCNWITSTENRLYIGWFGVLMIPTLLTATSVFIIAFIAAPPVDIDGIREPVSGSLLYGNNIISGAIIPTSAAIGLHFYPIWEAASVDEWLYNGGPYELIVLHFLLGVACYMGREWELSFRLGMRPWIAVAYSAPVAAATAVFLIYPIGQGSFSDGMPLGISGTFNFMIVFQAEHNILMHPFHMLGVAGVFGGSLFSAMHGSLVTSSLIRETTENESANEGYRFGQEEETYNIVAAHGYFGRLIFQYASFNNSRSLHFFLAAWPVVGIWFTALGISTMAFNLNGFNFNQSVVDSQGRVINTWADIINRANLGMEVMHERNAHNFPLDLAAVEAPSING.

T2 carries the N-acetylthreonine modification. T2 bears the Phosphothreonine mark. 3 consecutive transmembrane segments (helical) span residues 29-46, 118-133, and 142-156; these read YIGW…TATS, HFLL…EWEL, and WIAV…AATA. H118 serves as a coordination point for chlorophyll a. A pheophytin a-binding site is contributed by Y126. D170 and E189 together coordinate [CaMn4O5] cluster. Residues 197 to 218 form a helical membrane-spanning segment; that stretch reads FHMLGVAGVFGGSLFSAMHGSL. H198 contacts chlorophyll a. Residues H215 and 264–265 contribute to the a quinone site; that span reads SF. Fe cation is bound at residue H215. H272 contributes to the Fe cation binding site. Residues 274-288 form a helical membrane-spanning segment; the sequence is FLAAWPVVGIWFTAL. [CaMn4O5] cluster-binding residues include H332, E333, D342, and A344. The propeptide occupies 345–353; sequence AVEAPSING.

Belongs to the reaction center PufL/M/PsbA/D family. PSII is composed of 1 copy each of membrane proteins PsbA, PsbB, PsbC, PsbD, PsbE, PsbF, PsbH, PsbI, PsbJ, PsbK, PsbL, PsbM, PsbT, PsbX, PsbY, PsbZ, Psb30/Ycf12, at least 3 peripheral proteins of the oxygen-evolving complex and a large number of cofactors. It forms dimeric complexes. The D1/D2 heterodimer binds P680, chlorophylls that are the primary electron donor of PSII, and subsequent electron acceptors. It shares a non-heme iron and each subunit binds pheophytin, quinone, additional chlorophylls, carotenoids and lipids. D1 provides most of the ligands for the Mn4-Ca-O5 cluster of the oxygen-evolving complex (OEC). There is also a Cl(-1) ion associated with D1 and D2, which is required for oxygen evolution. The PSII complex binds additional chlorophylls, carotenoids and specific lipids. serves as cofactor. Tyr-161 forms a radical intermediate that is referred to as redox-active TyrZ, YZ or Y-Z. In terms of processing, C-terminally processed by CTPA; processing is essential to allow assembly of the oxygen-evolving complex and thus photosynthetic growth.

The protein resides in the plastid. Its subcellular location is the chloroplast thylakoid membrane. The enzyme catalyses 2 a plastoquinone + 4 hnu + 2 H2O = 2 a plastoquinol + O2. Photosystem II (PSII) is a light-driven water:plastoquinone oxidoreductase that uses light energy to abstract electrons from H(2)O, generating O(2) and a proton gradient subsequently used for ATP formation. It consists of a core antenna complex that captures photons, and an electron transfer chain that converts photonic excitation into a charge separation. The D1/D2 (PsbA/PsbD) reaction center heterodimer binds P680, the primary electron donor of PSII as well as several subsequent electron acceptors. This Lotus japonicus (Lotus corniculatus var. japonicus) protein is Photosystem II protein D1.